Consider the following 293-residue polypeptide: Protease HtpX (293 aa).

2 consecutive transmembrane segments (helical) span residues 4–24 and 34–54; these read IALF…VLSL and GLMI…LLMS. Histidine 139 contacts Zn(2+). Glutamate 140 is an active-site residue. Histidine 143 contacts Zn(2+). 2 consecutive transmembrane segments (helical) span residues 158–178 and 193–213; these read IVNT…SGFL and LVYF…ASII. Glutamate 222 lines the Zn(2+) pocket.

It belongs to the peptidase M48B family. Requires Zn(2+) as cofactor.

It localises to the cell inner membrane. This chain is Protease HtpX, found in Pectobacterium carotovorum subsp. carotovorum (strain PC1).